The chain runs to 108 residues: MMRGGMGNMQKMMKQMQKMQKEMQKAQEQLAEKTVEGTAGGGMVTVIANGHKQILEVKIKEEVVDPEDIEMLQDLVLAATNDALKKADELAAEMMGQFTKGLNIPGLF.

Residues 1-34 (MMRGGMGNMQKMMKQMQKMQKEMQKAQEQLAEKT) are disordered. The segment covering 9–18 (MQKMMKQMQK) has biased composition (low complexity). Residues 19–34 (MQKEMQKAQEQLAEKT) show a composition bias toward basic and acidic residues.

This sequence belongs to the YbaB/EbfC family. Homodimer.

The protein resides in the cytoplasm. It localises to the nucleoid. Its function is as follows. Binds to DNA and alters its conformation. May be involved in regulation of gene expression, nucleoid organization and DNA protection. This is Nucleoid-associated protein GWCH70_0020 from Geobacillus sp. (strain WCH70).